The following is a 404-amino-acid chain: XK-related protein 8 (404 aa).

8 helical membrane passes run 14–34, 44–64, 169–189, 209–229, 232–252, 262–282, 293–313, and 324–344; these read FVFS…DVWL, VTWF…VQTF, AVQF…VVDY, LIYF…LALC, VLSG…ALWA, SVAG…FSWF, SAIY…TWWC, and ALAL…FKAL.

The protein belongs to the XK family.

Its subcellular location is the cell membrane. It carries out the reaction a 1,2-diacyl-sn-glycero-3-phospho-L-serine(in) = a 1,2-diacyl-sn-glycero-3-phospho-L-serine(out). In terms of biological role, phospholipid scramblase that promotes phosphatidylserine exposure on apoptotic cell surface, possibly by mediating phospholipid scrambling. Phosphatidylserine is a specific marker only present at the surface of apoptotic cells and acts as a specific signal for engulfment. The sequence is that of XK-related protein 8 from Gasterosteus aculeatus (Three-spined stickleback).